The sequence spans 169 residues: Glycine-rich RNA-binding protein 8 (169 aa).

The RRM domain occupies 6–84 (YRCFVGGLAW…RVITVNEAQS (79 aa)). An ADP-ribosylarginine; by HopU1 modification is found at Arg-47. A disordered region spans residues 80–99 (NEAQSRGSGGGGGGRGGSGG). Residues 86–99 (GSGGGGGGRGGSGG) are compositionally biased toward gly residues. The glycine-rich (GR) required for cell-to-cell movement stretch occupies residues 86–168 (GSGGGGGGRG…GGSYGGGGGG (83 aa)). Positions 95-143 (GGSGGGYRSGGGGGYSGGGGGGYSGGGGGGYERRSGGYGSGGGGGGRGY) are nuclear targeting sequence (M9). The residue at position 103 (Ser-103) is a Phosphoserine. The tract at residues 130-169 (GGYGSGGGGGGRGYGGGGRREGGGYGGGDGGSYGGGGGGW) is disordered.

It belongs to the GR-RBP family. As to quaternary structure, interacts with TRN1. Binds to small phloem-mobile single-stranded RNAs (ss-sRNA, e.g. small interfering RNA (siRNA) and microRNA (miRNA)) in the phloeme exudate, including viral-derived sRNA (vsiRNA). Post-translationally, ADP-ribosylated by the Pseudomonas syringae type III effector HopU1. ADP-ribosylation reduces the ability of the protein to bind RNA. In terms of tissue distribution, ubiquitous.

It is found in the cytoplasm. The protein localises to the nucleus. The protein resides in the secreted. Its function is as follows. Plays a role in RNA transcription or processing during stress. Binds RNAs and DNAs sequence with a preference to single-stranded nucleic acids. Involved in mRNA alternative splicing of numerous targets by modulating splice site selection. Negatively regulates the circadian oscillations of its own transcript as well as RBG7 transcript. Forms an interlocked post-transcriptional negative feedback loop with the RBG7 autoregulatory circuit. Both proteins negatively autoregulate and reciprocally crossregulate by binding to their pre-mRNAs and promoting unproductive splicing coupled to degradation via the NMD pathway. Target of the Pseudomonas syringae type III effector HopU1. Mediates cell-to-cell trafficking of RNA interference (RNAi) signals (small RNAs (sRNA), e.g. small interfering RNA (siRNA) and microRNA (miRNA)) which regulate growth and development, as well as responses to environmental inputs, including pathogen attack; can compromise zucchini yellow mosaic virus (ZYMV) and tobacco rattle virus (TRV) infections at the early stage. The chain is Glycine-rich RNA-binding protein 8 from Arabidopsis thaliana (Mouse-ear cress).